Consider the following 361-residue polypeptide: Alanine racemase 2 (361 aa).

Catalysis depends on lysine 30, which acts as the Proton acceptor; specific for D-alanine. Lysine 30 is subject to N6-(pyridoxal phosphate)lysine. Arginine 122 is a binding site for substrate. The Proton acceptor; specific for L-alanine role is filled by tyrosine 256. Position 303 (methionine 303) interacts with substrate.

It belongs to the alanine racemase family. Requires pyridoxal 5'-phosphate as cofactor.

It carries out the reaction L-alanine = D-alanine. It functions in the pathway amino-acid biosynthesis; D-alanine biosynthesis; D-alanine from L-alanine: step 1/1. Its function is as follows. Catalyzes the interconversion of L-alanine and D-alanine. May also act on other amino acids. In Staphylococcus aureus (strain Mu50 / ATCC 700699), this protein is Alanine racemase 2 (alr2).